The following is a 453-amino-acid chain: Alpha-2B adrenergic receptor (453 aa).

The Extracellular portion of the chain corresponds to 1 to 17; the sequence is MSGPAMVHQEPYSVQAT. A helical membrane pass occupies residues 18 to 42; it reads AAIASAITFLILFTIFGNALVILAV. Topologically, residues 43-54 are cytoplasmic; the sequence is LTSRSLRAPQNL. The chain crosses the membrane as a helical span at residues 55-80; that stretch reads FLVSLAAADILVATLIIPFSLANELL. Topologically, residues 81–90 are extracellular; sequence GYWYFWRAWC. Cysteines 90 and 169 form a disulfide. A helical membrane pass occupies residues 91–113; the sequence is EVYLALDVLFCTSSIVHLCAISL. Over 114–135 the chain is Cytoplasmic; sequence DRYWAVSRALEYNSKRTPRRIK. The helical transmembrane segment at 136-158 threads the bilayer; it reads CIILTVWLIAAVISLPPLIYKGD. At 159–174 the chain is on the extracellular side; it reads QRPEPHGLPQCELNQE. Residues 175–198 form a helical membrane-spanning segment; sequence AWYILASSIGSFFAPCLIMILVYL. The Cytoplasmic segment spans residues 199 to 375; that stretch reads RIYVIAKRSH…LSREKRFTFV (177 aa). The disordered stretch occupies residues 214-329; it reads AKRGSGEGES…ASPASVFNPP (116 aa). Acidic residues predominate over residues 303 to 314; the sequence is AEEDEEEVEECE. Residues 376–399 traverse the membrane as a helical segment; it reads LAVVIGVFVVCWFPFFFSYSLGAI. The Extracellular portion of the chain corresponds to 400–408; sequence CPQHCKVPH. A helical membrane pass occupies residues 409–432; that stretch reads GLFQFFFWIGYCNSSLNPVIYTIF. The Cytoplasmic portion of the chain corresponds to 433–453; sequence NQDFRRAFRRILCRQWTQTGW. Residue cysteine 445 is the site of S-palmitoyl cysteine attachment.

It belongs to the G-protein coupled receptor 1 family. Adrenergic receptor subfamily. ADRA2B sub-subfamily. In terms of assembly, interacts with RAB26. Interacts with PPP1R9B. Interacts with GGA1, GGA2 and GGA3.

The protein localises to the cell membrane. In terms of biological role, alpha-2 adrenergic receptors mediate the catecholamine-induced inhibition of adenylate cyclase through the action of G proteins. The chain is Alpha-2B adrenergic receptor (Adra2b) from Mus musculus (Mouse).